A 350-amino-acid polypeptide reads, in one-letter code: MSKIRVLCVDDSALMRQIMTEIINSHPDMEVVATAPDPLVARDLIKKFNPQVLTLDVEMPRMDGLDFLEKLMRLRPMPVVMVSSLTGKGSEITLRALELGAIDFVTKPQLGIREGMLAYSELIAEKIRMAAKARLPQRSTTAEPTKIIQHMPLLSSEKLIAIGASTGGTEAIRHVLQPLPPTSPALLITQHMPPGFTKSFAERLNKLCQITVKEAEDGERVLPGHAYIAPGARHLELARSGANYQVRLNDGPPVNRHRPSVDVLFRSVAQYAGRNAVGVILTGMGNDGAAGMLELHQAGAYTLAQNEASCVVFGMPREAIAMGGVDEVVDLHQVSQRMLAQISAGQALRI.

In terms of domain architecture, Response regulatory spans 5-122; it reads RVLCVDDSAL…REGMLAYSEL (118 aa). Asp56 is modified (4-aspartylphosphate). A CheB-type methylesterase domain is found at 153–345; it reads LLSSEKLIAI…QRMLAQISAG (193 aa). Residues Ser165, His191, and Asp287 contribute to the active site.

Belongs to the CheB family. Phosphorylated by CheA. Phosphorylation of the N-terminal regulatory domain activates the methylesterase activity.

The protein localises to the cytoplasm. It carries out the reaction [protein]-L-glutamate 5-O-methyl ester + H2O = L-glutamyl-[protein] + methanol + H(+). It catalyses the reaction L-glutaminyl-[protein] + H2O = L-glutamyl-[protein] + NH4(+). Involved in chemotaxis. Part of a chemotaxis signal transduction system that modulates chemotaxis in response to various stimuli. Catalyzes the demethylation of specific methylglutamate residues introduced into the chemoreceptors (methyl-accepting chemotaxis proteins or MCP) by CheR. Also mediates the irreversible deamidation of specific glutamine residues to glutamic acid. Does not interact with the C-terminal pentapeptide of the chemoreceptors. This chain is Protein-glutamate methylesterase/protein-glutamine glutaminase, found in Pectobacterium atrosepticum (strain SCRI 1043 / ATCC BAA-672) (Erwinia carotovora subsp. atroseptica).